Here is a 765-residue protein sequence, read N- to C-terminus: DNA ligase (765 aa).

The interval Met-1 to Glu-34 is disordered. NAD(+)-binding positions include Asp-61–Asp-65, Ser-110–Leu-111, and Glu-144. The active-site N6-AMP-lysine intermediate is the Lys-146. NAD(+) contacts are provided by Arg-167, Glu-204, Lys-317, and Lys-341. Zn(2+) is bound by residues Cys-446, Cys-449, Cys-464, and Cys-470. The BRCT domain maps to Ala-687 to Gly-765.

This sequence belongs to the NAD-dependent DNA ligase family. LigA subfamily. Requires Mg(2+) as cofactor. It depends on Mn(2+) as a cofactor.

It catalyses the reaction NAD(+) + (deoxyribonucleotide)n-3'-hydroxyl + 5'-phospho-(deoxyribonucleotide)m = (deoxyribonucleotide)n+m + AMP + beta-nicotinamide D-nucleotide.. DNA ligase that catalyzes the formation of phosphodiester linkages between 5'-phosphoryl and 3'-hydroxyl groups in double-stranded DNA using NAD as a coenzyme and as the energy source for the reaction. It is essential for DNA replication and repair of damaged DNA. This Paracoccus denitrificans (strain Pd 1222) protein is DNA ligase.